The sequence spans 201 residues: Guanylate kinase (201 aa).

The Guanylate kinase-like domain occupies 2–180 (SCLFVISAPS…AARDVASIVQ (179 aa)). 9-16 (APSGAGKT) is a binding site for ATP.

Belongs to the guanylate kinase family.

The protein localises to the cytoplasm. It catalyses the reaction GMP + ATP = GDP + ADP. Essential for recycling GMP and indirectly, cGMP. The protein is Guanylate kinase of Nitrosomonas europaea (strain ATCC 19718 / CIP 103999 / KCTC 2705 / NBRC 14298).